A 465-amino-acid polypeptide reads, in one-letter code: Lactaldehyde dehydrogenase (465 aa).

An NAD(+)-binding site is contributed by 220–225 (GSVEIG). Residues glutamate 240 and cysteine 274 contribute to the active site.

Belongs to the aldehyde dehydrogenase family. In terms of assembly, homotetramer.

The enzyme catalyses (S)-lactaldehyde + NAD(+) + H2O = (S)-lactate + NADH + 2 H(+). It participates in cofactor biosynthesis; coenzyme F420 biosynthesis. Functionally, involved in F420 biosynthesis through the oxidation of lactaldehyde to lactate. In Methanococcus maripaludis (strain C7 / ATCC BAA-1331), this protein is Lactaldehyde dehydrogenase.